The chain runs to 430 residues: Glutamate-1-semialdehyde 2,1-aminomutase (430 aa).

Residue Lys-265 is modified to N6-(pyridoxal phosphate)lysine.

It belongs to the class-III pyridoxal-phosphate-dependent aminotransferase family. HemL subfamily. Homodimer. Pyridoxal 5'-phosphate is required as a cofactor.

The protein resides in the cytoplasm. The enzyme catalyses (S)-4-amino-5-oxopentanoate = 5-aminolevulinate. It functions in the pathway porphyrin-containing compound metabolism; protoporphyrin-IX biosynthesis; 5-aminolevulinate from L-glutamyl-tRNA(Glu): step 2/2. The polypeptide is Glutamate-1-semialdehyde 2,1-aminomutase (Shewanella baltica (strain OS223)).